The primary structure comprises 352 residues: uncharacterized protein (352 aa).

The segment at 1 to 40 (MTSTMKLFTDHAEISVRERPPQRNNNNQEQDNSNRPAPRR) is disordered. Residues 8–21 (FTDHAEISVRERPP) are compositionally biased toward basic and acidic residues. A compositionally biased stretch (low complexity) spans 22–36 (QRNNNNQEQDNSNRP). The chain crosses the membrane as a helical span at residues 317–333 (MTITLPCGLTIAFFVYY).

Its subcellular location is the host cell membrane. This is an uncharacterized protein from Diadromus pulchellus idnoreovirus 1 (DpIRV-1).